Consider the following 203-residue polypeptide: Small ribosomal subunit protein uS4 (203 aa).

The region spanning 93–153 is the S4 RNA-binding domain; the sequence is RRFDNVVFRA…PKSKNMSAVS (61 aa).

The protein belongs to the universal ribosomal protein uS4 family. As to quaternary structure, part of the 30S ribosomal subunit. Contacts protein S5. The interaction surface between S4 and S5 is involved in control of translational fidelity.

One of the primary rRNA binding proteins, it binds directly to 16S rRNA where it nucleates assembly of the body of the 30S subunit. Functionally, with S5 and S12 plays an important role in translational accuracy. In Chlorobium phaeovibrioides (strain DSM 265 / 1930) (Prosthecochloris vibrioformis (strain DSM 265)), this protein is Small ribosomal subunit protein uS4.